The primary structure comprises 265 residues: Sarcotoxin II-1 (265 aa).

Positions 1–22 are cleaved as a signal peptide; the sequence is MKSFVLFAACMAIIALGSLAHA. The propeptide at 23–24 is removed by a dipeptidylpeptidase; it reads YP. Pyrrolidone carboxylic acid is present on glutamine 25. The residue at position 264 (glycine 264) is a Glycine amide.

Belongs to the attacin/sarcotoxin-2 family. As to expression, synthesized by the fat body and is eventually secreted into the hemolymph.

It localises to the secreted. Its function is as follows. Sarcotoxin II is an antibacterial protein which plays a role in the inflammatory response of this insect. The main effect of sarcotoxin II on E.coli may be the inhibition of cell wall synthesis, including septum formation. The sequence is that of Sarcotoxin II-1 from Sarcophaga peregrina (Flesh fly).